The sequence spans 282 residues: 2-dehydro-3-deoxyphosphooctonate aldolase (282 aa).

The protein belongs to the KdsA family.

The protein resides in the cytoplasm. The enzyme catalyses D-arabinose 5-phosphate + phosphoenolpyruvate + H2O = 3-deoxy-alpha-D-manno-2-octulosonate-8-phosphate + phosphate. Its pathway is carbohydrate biosynthesis; 3-deoxy-D-manno-octulosonate biosynthesis; 3-deoxy-D-manno-octulosonate from D-ribulose 5-phosphate: step 2/3. The protein operates within bacterial outer membrane biogenesis; lipopolysaccharide biosynthesis. This chain is 2-dehydro-3-deoxyphosphooctonate aldolase, found in Shewanella pealeana (strain ATCC 700345 / ANG-SQ1).